The following is a 156-amino-acid chain: SsrA-binding protein (156 aa).

Over residues 135–150 (KRDTIKDREWQRDRSR) the composition is skewed to basic and acidic residues. The interval 135-156 (KRDTIKDREWQRDRSRIMKKNT) is disordered.

It belongs to the SmpB family.

It is found in the cytoplasm. In terms of biological role, required for rescue of stalled ribosomes mediated by trans-translation. Binds to transfer-messenger RNA (tmRNA), required for stable association of tmRNA with ribosomes. tmRNA and SmpB together mimic tRNA shape, replacing the anticodon stem-loop with SmpB. tmRNA is encoded by the ssrA gene; the 2 termini fold to resemble tRNA(Ala) and it encodes a 'tag peptide', a short internal open reading frame. During trans-translation Ala-aminoacylated tmRNA acts like a tRNA, entering the A-site of stalled ribosomes, displacing the stalled mRNA. The ribosome then switches to translate the ORF on the tmRNA; the nascent peptide is terminated with the 'tag peptide' encoded by the tmRNA and targeted for degradation. The ribosome is freed to recommence translation, which seems to be the essential function of trans-translation. In Legionella pneumophila (strain Paris), this protein is SsrA-binding protein.